Here is a 243-residue protein sequence, read N- to C-terminus: Adenylate dimethylallyltransferase (243 aa).

It carries out the reaction dimethylallyl diphosphate + AMP = N(6)-(dimethylallyl)adenosine 5'-phosphate + diphosphate. In terms of biological role, transfers dimethylallyl groups to AMP as part of the biosynthesis of cytokinin phytohormones. This is Adenylate dimethylallyltransferase (tzs) from Agrobacterium tumefaciens (strain T37).